The chain runs to 537 residues: Cytochrome P450 monooxygenase ltmQ (537 aa).

The chain crosses the membrane as a helical span at residues 10 to 30 (FPKLNFATIVISGATIIGIIF). N-linked (GlcNAc...) asparagine glycans are attached at residues N182, N188, and N310. C476 contributes to the heme binding site.

Belongs to the cytochrome P450 family. The cofactor is heme.

It localises to the membrane. Its pathway is secondary metabolite biosynthesis. In terms of biological role, cytochrome P450 monooxygenase; part of the gene clusters that mediates the biosynthesis of lolitrems, indole-diterpene mycotoxins that are potent tremorgens in mammals, and are synthesized by clavicipitaceous fungal endophytes in association with their grass hosts. The geranylgeranyl diphosphate (GGPP) synthase ltmG is proposed to catalyze the first step in lolitrem biosynthesis. LtmG catalyzes a series of iterative condensations of isopentenyl diphosphate (IPP) with dimethylallyl diphosphate (DMAPP), geranyl diphosphate (GPP), and farnesyl diphosphate (FPP), to form GGPP. GGPP then condenses with indole-3-glycerol phosphate to form 3-geranylgeranylindole, an acyclic intermediate, to be incorporated into paxilline. Either ltmG or ltmC could be responsible for this step, as both are putative prenyl transferases. The FAD-dependent monooxygenase ltmM then catalyzes the epoxidation of the two terminal alkenes of the geranylgeranyl moiety, which is subsequently cyclized by ltmB, to paspaline. The cytochrome P450 monooxygenases ltmQ and ltmP can sequentially oxidize paspaline to terpendole E and terpendole F. Alternatively, ltmP converts paspaline to an intermediate which is oxidized by ltmQ to terpendole F. LtmF, ltmK, ltmE and ltmJ appear to be unique to the epichloe endophytes. The prenyltransferase ltmF is involved in the 27-hydroxyl-O-prenylation. The cytochrome P450 monooxygenase ltmK is required for the oxidative acetal ring formation. The multi-functional prenyltransferase ltmE is required for C20- and C21-prenylations of the indole ring of paspalanes and acts together with the cytochrome P450 monooxygenase ltmJ to yield lolitremanes by multiple oxidations and ring closures. The stereoisomer pairs of lolitriol and lolitrem N or lolitrem B and lolitrem F may be attributed to variations in the way in which ring closure can occur under the action of ltmJ. While the major product of this pathway is lolitrem B, the prenyl transferases and cytochrome P450 monooxygenases identified in this pathway have a remarkable versatility in their regio- and stereo-specificities to generate a diverse range of metabolites that are products of a metabolic grid rather than a linear pathway. This Epichloe festucae var. lolii (Neotyphodium lolii) protein is Cytochrome P450 monooxygenase ltmQ.